The chain runs to 329 residues: MNLIWGFLILILVLIFLGVFFSFVPLGLWISALAAGVSIRITDLIGMRLRRVPPGVIINSLIKAHKAGLSEVTLDKLEAHYLAGGNVDKVVNALIAAQRAGIPLTFEKAAAIDLAGRDVLEAVQMSVNPKVIETPVVAAVAKDGIELKAKARVTVRANIERLVGGAGEATIIARVGEGIVTTIGSAESYKEVLENPDSISKTVLAKGLDAGTAFEIVSIDIADVDVGNNVGARLKMDQAEADMRIAQAQAESRRALAIAREQEMKALTQEMRARLIEAEKEVPLAIAEALRSGKIGVLDYYTLKNIIADTAMREAISKLGQKEEEGRKD.

The helical transmembrane segment at 4–24 (IWGFLILILVLIFLGVFFSFV) threads the bilayer.

The protein belongs to the flotillin-like FloA family. As to quaternary structure, homooligomerizes.

The protein localises to the cell membrane. Its subcellular location is the membrane raft. Found in functional membrane microdomains (FMM) that may be equivalent to eukaryotic membrane rafts. FMMs are highly dynamic and increase in number as cells age. Flotillins are thought to be important factors in membrane fluidity. The protein is Flotillin-like protein FloA of Dictyoglomus turgidum (strain DSM 6724 / Z-1310).